Reading from the N-terminus, the 233-residue chain is LexA repressor (233 aa).

The segment at residues 26–46 (FEEMKEALDLKSKSGVHRLIS) is a DNA-binding region (H-T-H motif). Active-site for autocatalytic cleavage activity residues include Ser153 and Lys191.

Belongs to the peptidase S24 family. As to quaternary structure, homodimer.

It catalyses the reaction Hydrolysis of Ala-|-Gly bond in repressor LexA.. Functionally, represses a number of genes involved in the response to DNA damage (SOS response), including recA and lexA. In the presence of single-stranded DNA, RecA interacts with LexA causing an autocatalytic cleavage which disrupts the DNA-binding part of LexA, leading to derepression of the SOS regulon and eventually DNA repair. This chain is LexA repressor, found in Erythrobacter litoralis (strain HTCC2594).